Reading from the N-terminus, the 404-residue chain is Inosine-5'-monophosphate dehydrogenase (404 aa).

NAD(+) is bound by residues Asp-172 and 222–224; that span reads GIG. 2 residues coordinate K(+): Gly-224 and Gly-226. An IMP-binding site is contributed by Ser-227. A K(+)-binding site is contributed by Cys-229. Catalysis depends on Cys-229, which acts as the Thioimidate intermediate. IMP contacts are provided by residues 262 to 264, 285 to 286, and 309 to 313; these read DGG, GN, and YVGMG. Arg-325 functions as the Proton acceptor in the catalytic mechanism. Glu-340 serves as a coordination point for IMP. Residues Glu-394, Ser-395, and His-396 each coordinate K(+).

It belongs to the IMPDH/GMPR family. In terms of assembly, homotetramer. Requires K(+) as cofactor.

The catalysed reaction is IMP + NAD(+) + H2O = XMP + NADH + H(+). Its pathway is purine metabolism; XMP biosynthesis via de novo pathway; XMP from IMP: step 1/1. Its activity is regulated as follows. Mycophenolic acid (MPA) is a non-competitive inhibitor that prevents formation of the closed enzyme conformation by binding to the same site as the amobile flap. In contrast, mizoribine monophosphate (MZP) is a competitive inhibitor that induces the closed conformation. MPA is a potent inhibitor of mammalian IMPDHs but a poor inhibitor of the bacterial enzymes. MZP is a more potent inhibitor of bacterial IMPDH. In terms of biological role, catalyzes the conversion of inosine 5'-phosphate (IMP) to xanthosine 5'-phosphate (XMP), the first committed and rate-limiting step in the de novo synthesis of guanine nucleotides, and therefore plays an important role in the regulation of cell growth. Essential for mouse infection by tick bite and critical for the survival in environments that appear to lack sufficient amounts of guanine, guanosine, and/or deoxyguanosine to support spirochete growth, such as mammalian host tissues. In Borreliella burgdorferi (strain ATCC 35210 / DSM 4680 / CIP 102532 / B31) (Borrelia burgdorferi), this protein is Inosine-5'-monophosphate dehydrogenase.